Consider the following 164-residue polypeptide: UPF0304 protein YE1336 (164 aa).

Belongs to the UPF0304 family.

The protein is UPF0304 protein YE1336 of Yersinia enterocolitica serotype O:8 / biotype 1B (strain NCTC 13174 / 8081).